The sequence spans 588 residues: L-fucose isomerase (588 aa).

Catalysis depends on proton acceptor residues E335 and D359. Positions 335, 359, and 525 each coordinate Mn(2+).

This sequence belongs to the L-fucose isomerase family. Requires Mn(2+) as cofactor.

The protein localises to the cytoplasm. The enzyme catalyses L-fucose = L-fuculose. Its pathway is carbohydrate degradation; L-fucose degradation; L-lactaldehyde and glycerone phosphate from L-fucose: step 1/3. In terms of biological role, converts the aldose L-fucose into the corresponding ketose L-fuculose. The sequence is that of L-fucose isomerase from Streptococcus pneumoniae (strain Taiwan19F-14).